A 216-amino-acid polypeptide reads, in one-letter code: Probable nicotinate-nucleotide adenylyltransferase (216 aa).

This sequence belongs to the NadD family.

The catalysed reaction is nicotinate beta-D-ribonucleotide + ATP + H(+) = deamido-NAD(+) + diphosphate. It participates in cofactor biosynthesis; NAD(+) biosynthesis; deamido-NAD(+) from nicotinate D-ribonucleotide: step 1/1. Its function is as follows. Catalyzes the reversible adenylation of nicotinate mononucleotide (NaMN) to nicotinic acid adenine dinucleotide (NaAD). The sequence is that of Probable nicotinate-nucleotide adenylyltransferase from Geobacillus thermodenitrificans (strain NG80-2).